We begin with the raw amino-acid sequence, 225 residues long: Heptaprenylglyceryl phosphate synthase (225 aa).

Lys-6 serves as a coordination point for sn-glycerol 1-phosphate. Asp-8 and Thr-34 together coordinate Mg(2+). Residues 153 to 158, Gly-183, and 203 to 204 contribute to the sn-glycerol 1-phosphate site; these read YVEYSG and GN.

It belongs to the GGGP/HepGP synthase family. Group I subfamily. Homodimer. The cofactor is Mg(2+).

It carries out the reaction sn-glycerol 1-phosphate + all-trans-heptaprenyl diphosphate = 3-heptaprenyl-sn-glycero-1-phosphate + diphosphate. The protein operates within membrane lipid metabolism; glycerophospholipid metabolism. Functionally, prenyltransferase that catalyzes in vivo the transfer of the heptaprenyl moiety of heptaprenyl pyrophosphate (HepPP; 35 carbon atoms) to the C3 hydroxyl of sn-glycerol-1-phosphate (G1P), producing heptaprenylglyceryl phosphate (HepGP). This reaction is an ether-bond-formation step in the biosynthesis of archaea-type G1P-based membrane lipids found in Bacillales. The chain is Heptaprenylglyceryl phosphate synthase from Listeria monocytogenes serotype 4b (strain CLIP80459).